Here is a 133-residue protein sequence, read N- to C-terminus: Interferon alpha-inducible protein 27-like protein 2 (133 aa).

3 helical membrane-spanning segments follow: residues 8-28 (AAIG…AVGF), 51-71 (GGGV…AAGL), and 73-93 (TSSN…LGGA). A disordered region spans residues 93–133 (AKRASPSPPPGGPRPEGEQPGENVPQVEPPKSPLGPEKHEK).

The protein belongs to the IFI6/IFI27 family.

The protein localises to the mitochondrion membrane. Its function is as follows. Plays a role in the apoptotic process and has a pro-apoptotic activity. The sequence is that of Interferon alpha-inducible protein 27-like protein 2 from Bos taurus (Bovine).